Reading from the N-terminus, the 208-residue chain is T-cell surface glycoprotein CD8 beta chain (208 aa).

Positions 1-21 (MQPWLWLVFSVKLSALWGSSA) are cleaved as a signal peptide. Residues 22-131 (LLQTPSSLLV…MVVFGTGTKL (110 aa)) form the Ig-like V-type domain. Topologically, residues 22–168 (LLQTPSSLLV…KTQKGLTCGL (147 aa)) are extracellular. 3 N-linked (GlcNAc...) asparagine glycosylation sites follow: Asn34, Asn88, and Asn94. Cys41 and Cys115 form a disulfide bridge. Residues 169-189 (ITLSLLVACILVLLVSLSVAI) form a helical membrane-spanning segment. Residues 190–208 (HFHCMRRRARIHFMKQFHK) are Cytoplasmic-facing.

In terms of assembly, forms disulfide-linked heterodimers with CD8A at the cell surface. Interacts with CD3D; this interaction couples TCR-CD3 with CD8. Interacts with LCK. In terms of processing, phosphorylated as a consequence of T-cell activation. Post-translationally, palmitoylated at the cytoplasmic tail and thereby targets the heterodimer CD8A/CD8B to lipid rafts unlike CD8A homodimers.

Its subcellular location is the cell membrane. Functionally, integral membrane glycoprotein that plays an essential role in the immune response and serves multiple functions in responses against both external and internal offenses. In T-cells, functions primarily as a coreceptor for MHC class I molecule:peptide complex. The antigens presented by class I peptides are derived from cytosolic proteins while class II derived from extracellular proteins. Interacts simultaneously with the T-cell receptor (TCR) and the MHC class I proteins presented by antigen presenting cells (APCs). In turn, recruits the Src kinase LCK to the vicinity of the TCR-CD3 complex. A palmitoylation site in the cytoplasmic tail of CD8B chain contributes to partitioning of CD8 into the plasma membrane lipid rafts where signaling proteins are enriched. Once LCK recruited, it initiates different intracellular signaling pathways by phosphorylating various substrates ultimately leading to lymphokine production, motility, adhesion and activation of cytotoxic T-lymphocytes (CTLs). Additionally, plays a critical role in thymic selection of CD8+ T-cells. This chain is T-cell surface glycoprotein CD8 beta chain (Cd8b), found in Rattus norvegicus (Rat).